The sequence spans 59 residues: Large ribosomal subunit protein uL30 (59 aa).

The protein belongs to the universal ribosomal protein uL30 family. In terms of assembly, part of the 50S ribosomal subunit.

This Stutzerimonas stutzeri (strain A1501) (Pseudomonas stutzeri) protein is Large ribosomal subunit protein uL30.